The following is a 327-amino-acid chain: MSVAPPVLVIAGLTGAGKTLAIQQLEQLGYTSLEGIPPAQVIPLVEAMRTHHAALAISLNLHAQEYRDQVPTLAAWVQSQGIPFLFLEARSPVLLNRLSAHRRPHPYGEAAGLWEAIEQERLALAPVRERCTHWLDTSDLNAQQLRQQLQALVQGIPQPLNLRLVSFGFKYGVPPDANLLFDVRFLPNPFFQPHLRRLTGQDPLLQEFLFADPITQSTYQHILSLIKAFWPHYRAERRPHLTLAIGCTGGQHRSVALVERLAQDLQPWTVPAGNHVLPDLNVQVQHRHLLDSQRELEARFGPVPGEAGVAQQQVRIPLAGVPAPSHA.

12-19 (GLTGAGKT) contacts ATP.

Belongs to the RapZ-like family.

In terms of biological role, displays ATPase and GTPase activities. In Synechococcus sp. (strain JA-2-3B'a(2-13)) (Cyanobacteria bacterium Yellowstone B-Prime), this protein is Nucleotide-binding protein CYB_0992.